The following is a 275-amino-acid chain: 4-hydroxy-tetrahydrodipicolinate reductase (275 aa).

NAD(+) contacts are provided by residues 13–18 (GAGGKM) and 108–110 (GTT). His164 acts as the Proton donor/acceptor in catalysis. A (S)-2,3,4,5-tetrahydrodipicolinate-binding site is contributed by His165. Lys168 acts as the Proton donor in catalysis. 174–175 (GT) contacts (S)-2,3,4,5-tetrahydrodipicolinate.

Belongs to the DapB family.

The protein localises to the cytoplasm. It catalyses the reaction (S)-2,3,4,5-tetrahydrodipicolinate + NAD(+) + H2O = (2S,4S)-4-hydroxy-2,3,4,5-tetrahydrodipicolinate + NADH + H(+). The enzyme catalyses (S)-2,3,4,5-tetrahydrodipicolinate + NADP(+) + H2O = (2S,4S)-4-hydroxy-2,3,4,5-tetrahydrodipicolinate + NADPH + H(+). Its pathway is amino-acid biosynthesis; L-lysine biosynthesis via DAP pathway; (S)-tetrahydrodipicolinate from L-aspartate: step 4/4. Its function is as follows. Catalyzes the conversion of 4-hydroxy-tetrahydrodipicolinate (HTPA) to tetrahydrodipicolinate. The chain is 4-hydroxy-tetrahydrodipicolinate reductase from Picosynechococcus sp. (strain ATCC 27264 / PCC 7002 / PR-6) (Agmenellum quadruplicatum).